A 255-amino-acid polypeptide reads, in one-letter code: Ribosomal RNA small subunit methyltransferase A (255 aa).

S-adenosyl-L-methionine contacts are provided by N13, L15, G40, E61, D85, and N103.

It belongs to the class I-like SAM-binding methyltransferase superfamily. rRNA adenine N(6)-methyltransferase family. RsmA subfamily.

It localises to the cytoplasm. The catalysed reaction is adenosine(1518)/adenosine(1519) in 16S rRNA + 4 S-adenosyl-L-methionine = N(6)-dimethyladenosine(1518)/N(6)-dimethyladenosine(1519) in 16S rRNA + 4 S-adenosyl-L-homocysteine + 4 H(+). In terms of biological role, specifically dimethylates two adjacent adenosines (A1518 and A1519) in the loop of a conserved hairpin near the 3'-end of 16S rRNA in the 30S particle. May play a critical role in biogenesis of 30S subunits. The protein is Ribosomal RNA small subunit methyltransferase A of Dechloromonas aromatica (strain RCB).